Reading from the N-terminus, the 560-residue chain is Serine palmitoyltransferase 2 (560 aa).

Residues 65 to 85 traverse the membrane as a helical segment; that stretch reads PMLVAVLTYVGYGVLTLFGYL. Residue Lys-377 is modified to N6-(pyridoxal phosphate)lysine.

Belongs to the class-II pyridoxal-phosphate-dependent aminotransferase family. In terms of assembly, component of the serine palmitoyltransferase (SPT) complex, which is composed of SPTLC1, SPTLC2 or SPTLC3 and SPTSSA or SPTSSB. The heterodimer consisting of SPTLC1 and SPTLC2/SPTLC3 forms the catalytic core of the enzyme, while SPTSSA or SPTSSB subunits determine substrate specificity. SPT also interacts with ORMDL proteins, especially ORMDL3, which negatively regulate SPT activity in the presence of ceramides. Forms dimers of heterodimers with SPTLC1. Pyridoxal 5'-phosphate is required as a cofactor. Expressed in a variety of tissues. Expressed in brains cortices (at protein level). Expressed in brown and white adipose tissues. Expressed in liver.

The protein localises to the endoplasmic reticulum membrane. It catalyses the reaction L-serine + hexadecanoyl-CoA + H(+) = 3-oxosphinganine + CO2 + CoA. The enzyme catalyses octadecanoyl-CoA + L-serine + H(+) = 3-oxoeicosasphinganine + CO2 + CoA. It functions in the pathway lipid metabolism; sphingolipid metabolism. With respect to regulation, SPT complex catalytic activity is negatively regulated by ORMDL proteins, including ORMDL3, in the presence of ceramides. This mechanism allows to maintain ceramide levels at sufficient concentrations for the production of complex sphingolipids, but which prevents the accumulation of ceramides to levels that trigger apoptosis. In terms of biological role, component of the serine palmitoyltransferase multisubunit enzyme (SPT) that catalyzes the initial and rate-limiting step in sphingolipid biosynthesis by condensing L-serine and activated acyl-CoA (most commonly palmitoyl-CoA) to form long-chain bases. The SPT complex is composed of SPTLC1, SPTLC2 or SPTLC3 and SPTSSA or SPTSSB. Within this complex, the heterodimer consisting of SPTLC1 and SPTLC2/SPTLC3 forms the catalytic core. The composition of the serine palmitoyltransferase (SPT) complex determines the substrate preference. The SPTLC1-SPTLC2-SPTSSA complex shows a strong preference for C16-CoA substrate, while the SPTLC1-SPTLC3-SPTSSA isozyme uses both C14-CoA and C16-CoA as substrates, with a slight preference for C14-CoA. The SPTLC1-SPTLC2-SPTSSB complex shows a strong preference for C18-CoA substrate, while the SPTLC1-SPTLC3-SPTSSB isozyme displays an ability to use a broader range of acyl-CoAs, without apparent preference. Crucial for adipogenesis. The polypeptide is Serine palmitoyltransferase 2 (Mus musculus (Mouse)).